A 447-amino-acid chain; its full sequence is ATP-dependent protease ATPase subunit HslU (447 aa).

Residues isoleucine 18, 60-65, aspartate 259, glutamate 325, and arginine 397 each bind ATP; that span reads GVGKTE.

The protein belongs to the ClpX chaperone family. HslU subfamily. In terms of assembly, a double ring-shaped homohexamer of HslV is capped on each side by a ring-shaped HslU homohexamer. The assembly of the HslU/HslV complex is dependent on binding of ATP.

Its subcellular location is the cytoplasm. Its function is as follows. ATPase subunit of a proteasome-like degradation complex; this subunit has chaperone activity. The binding of ATP and its subsequent hydrolysis by HslU are essential for unfolding of protein substrates subsequently hydrolyzed by HslV. HslU recognizes the N-terminal part of its protein substrates and unfolds these before they are guided to HslV for hydrolysis. This chain is ATP-dependent protease ATPase subunit HslU, found in Burkholderia ambifaria (strain ATCC BAA-244 / DSM 16087 / CCUG 44356 / LMG 19182 / AMMD) (Burkholderia cepacia (strain AMMD)).